The following is a 492-amino-acid chain: Spore germination protein XA (492 aa).

The next 7 membrane-spanning stretches (helical) occupy residues 246 to 266 (FILL…FPFF), 285 to 305 (LLSL…VALV), 325 to 345 (EGIP…FELL), 353 to 373 (PAAF…QAAI), 377 to 397 (FVSP…FTLV), 413 to 433 (FLMS…LIVI), and 442 to 462 (GLPF…PSTF).

Belongs to the GerABKA family.

Its subcellular location is the cell membrane. In terms of biological role, may allow B.anthracis to germinate within phagocytic cells and therefore involved in virulence. The polypeptide is Spore germination protein XA (gerXA) (Bacillus anthracis).